A 108-amino-acid chain; its full sequence is uncharacterized protein (108 aa).

The interval 81 to 108 is disordered; the sequence is FKCLDSPPPVPPSSSQGEDEENTVDSQY. Over residues 97-108 the composition is skewed to acidic residues; that stretch reads GEDEENTVDSQY.

This is an uncharacterized protein from Saccharomyces cerevisiae (strain ATCC 204508 / S288c) (Baker's yeast).